The chain runs to 663 residues: UvrABC system protein B (663 aa).

The 158-residue stretch at Asp-31–Arg-188 folds into the Helicase ATP-binding domain. Position 44–51 (Gly-44–Thr-51) interacts with ATP. Residues Tyr-97–Val-120 carry the Beta-hairpin motif. Residues Gln-435–Ile-601 form the Helicase C-terminal domain. Residues Gln-627–Met-662 form the UVR domain.

Belongs to the UvrB family. In terms of assembly, forms a heterotetramer with UvrA during the search for lesions. Interacts with UvrC in an incision complex.

Its subcellular location is the cytoplasm. In terms of biological role, the UvrABC repair system catalyzes the recognition and processing of DNA lesions. A damage recognition complex composed of 2 UvrA and 2 UvrB subunits scans DNA for abnormalities. Upon binding of the UvrA(2)B(2) complex to a putative damaged site, the DNA wraps around one UvrB monomer. DNA wrap is dependent on ATP binding by UvrB and probably causes local melting of the DNA helix, facilitating insertion of UvrB beta-hairpin between the DNA strands. Then UvrB probes one DNA strand for the presence of a lesion. If a lesion is found the UvrA subunits dissociate and the UvrB-DNA preincision complex is formed. This complex is subsequently bound by UvrC and the second UvrB is released. If no lesion is found, the DNA wraps around the other UvrB subunit that will check the other stand for damage. In Streptococcus mutans serotype c (strain ATCC 700610 / UA159), this protein is UvrABC system protein B.